Consider the following 101-residue polypeptide: Small ribosomal subunit protein bS18c (101 aa).

Residues 82 to 101 are disordered; that stretch reads KQFERAESTPRTPGPRTRNK.

This sequence belongs to the bacterial ribosomal protein bS18 family. Part of the 30S ribosomal subunit.

Its subcellular location is the plastid. The protein resides in the chloroplast. The protein is Small ribosomal subunit protein bS18c of Platanus occidentalis (Sycamore).